Consider the following 194-residue polypeptide: Imidazoleglycerol-phosphate dehydratase (194 aa).

It belongs to the imidazoleglycerol-phosphate dehydratase family.

The protein localises to the cytoplasm. The enzyme catalyses D-erythro-1-(imidazol-4-yl)glycerol 3-phosphate = 3-(imidazol-4-yl)-2-oxopropyl phosphate + H2O. It functions in the pathway amino-acid biosynthesis; L-histidine biosynthesis; L-histidine from 5-phospho-alpha-D-ribose 1-diphosphate: step 6/9. This is Imidazoleglycerol-phosphate dehydratase from Caldicellulosiruptor bescii (strain ATCC BAA-1888 / DSM 6725 / KCTC 15123 / Z-1320) (Anaerocellum thermophilum).